We begin with the raw amino-acid sequence, 301 residues long: MKIGILSRNQDLYSTRRLIEAAESRGHEVKVIDALRCYMNINSEKPQIHFKGEELINYDAIIPRIGASVTFYGTAVLRQFEMMNVYPVNESVAITRSRDKLRSMQLLSRKGIGMPITGFASKPDDVKDLLDMVGGGPVVIKLLEGTQGIGVVLAETRKAAESVVEAFMGLKANIMVQEFIKEAGGADIRCFVIGGKVIAAMKRQGAEGEFRSNLHRGGSASLVKLTPEERKTAVAAANIMGLNVAGVDLLRSDRGPLVMEVNSSPGLEGIEAATGKDVAGLIVDFIEKNAATKGTKTRGKG.

One can recognise an ATP-grasp domain in the interval Met104–Glu287. ATP contacts are provided by residues Lys141, Glu178–Phe179, Asp187, and Arg211–Asn213. Residues Asp248, Glu260, and Asn262 each contribute to the Mg(2+) site. 3 residues coordinate Mn(2+): Asp248, Glu260, and Asn262.

Belongs to the RimK family. Mg(2+) is required as a cofactor. It depends on Mn(2+) as a cofactor.

The sequence is that of Probable alpha-L-glutamate ligase from Aliivibrio salmonicida (strain LFI1238) (Vibrio salmonicida (strain LFI1238)).